The sequence spans 326 residues: MFLLSLLIKIITIILPLLVAVAYMTLAERKVMAAIQRRKGPNIVGVFGLLQPLADGLKLFVKETILPSSANIIIFILAPILTFLLALVSWCVIPLGEGMVYSDINIGVLYILAISSLGVYGIITSGWASNSKYAFLGALRSAAQMVSYEVSIGLILINVLLCSGSLNFTEIVLAQQSIWFVIPLFPIFIMFYISILAETNRAPFDLPEAEAELVAGYNVEYSAMGFALFFLGEYANMILMCSLTTILFFGGWLPPFNLTILYWISPTVWFGLKTTFLLFGFIWIRSSFPRYRYDQLMRLGWKILLPLSLAWVFLISGILLSFNWLP.

Transmembrane regions (helical) follow at residues 1–21 (MFLL…LVAV), 41–61 (PNIV…KLFV), 72–92 (IIIF…SWCV), 104–124 (INIG…GIIT), 152–172 (IGLI…TEIV), 177–197 (SIWF…SILA), 234–256 (YANM…LPPF), 268–288 (VWFG…RSSF), and 303–323 (ILLP…LSFN).

This sequence belongs to the complex I subunit 1 family.

The protein resides in the mitochondrion inner membrane. The catalysed reaction is a ubiquinone + NADH + 5 H(+)(in) = a ubiquinol + NAD(+) + 4 H(+)(out). Core subunit of the mitochondrial membrane respiratory chain NADH dehydrogenase (Complex I) that is believed to belong to the minimal assembly required for catalysis. Complex I functions in the transfer of electrons from NADH to the respiratory chain. The immediate electron acceptor for the enzyme is believed to be ubiquinone. The protein is NADH-ubiquinone oxidoreductase chain 1 (ND1) of Chondrus crispus (Carrageen Irish moss).